Reading from the N-terminus, the 301-residue chain is Glycine--tRNA ligase alpha subunit (301 aa).

Belongs to the class-II aminoacyl-tRNA synthetase family. As to quaternary structure, tetramer of two alpha and two beta subunits.

It is found in the cytoplasm. The catalysed reaction is tRNA(Gly) + glycine + ATP = glycyl-tRNA(Gly) + AMP + diphosphate. The protein is Glycine--tRNA ligase alpha subunit of Shewanella loihica (strain ATCC BAA-1088 / PV-4).